Consider the following 66-residue polypeptide: MLNLTLTFLVVALIAAFLGFSGIAASAAAIAKILFCIFIVCFILVWPNKTGLVPVQEYPGRSCLHL.

Transmembrane regions (helical) follow at residues 4-24 (LTLT…SGIA) and 28-47 (AAIA…LVWP).

This sequence belongs to the UPF0391 family.

It localises to the cell membrane. The protein is UPF0391 membrane protein AM1_5042 of Acaryochloris marina (strain MBIC 11017).